The primary structure comprises 952 residues: uncharacterized protein (952 aa).

The region spanning 1–141 is the CheB-type methylesterase domain; that stretch reads MASLLARHTK…PWIADYLIRR (141 aa). The 273-residue stretch at 168–440 folds into the CheR-type methyltransferase domain; sequence VGQFDGLEPA…SARHRIWQAL (273 aa). The segment covering 923–935 has biased composition (polar residues); it reads HNQTEASPETSSG. The disordered stretch occupies residues 923–952; it reads HNQTEASPETSSGGLPGSDGTGADGGAPRA. Residues 936-952 show a composition bias toward gly residues; it reads GLPGSDGTGADGGAPRA.

This is an uncharacterized protein from Rhodobacter capsulatus (Rhodopseudomonas capsulata).